The chain runs to 703 residues: Elongation factor G (703 aa).

The tr-type G domain occupies 9-292; that stretch reads ERTRNIGIMA…AVVDYLPGPL (284 aa). GTP-binding positions include 18–25, 91–95, and 145–148; these read AHIDAGKT, DTPGH, and NKMD.

Belongs to the TRAFAC class translation factor GTPase superfamily. Classic translation factor GTPase family. EF-G/EF-2 subfamily.

It is found in the cytoplasm. Functionally, catalyzes the GTP-dependent ribosomal translocation step during translation elongation. During this step, the ribosome changes from the pre-translocational (PRE) to the post-translocational (POST) state as the newly formed A-site-bound peptidyl-tRNA and P-site-bound deacylated tRNA move to the P and E sites, respectively. Catalyzes the coordinated movement of the two tRNA molecules, the mRNA and conformational changes in the ribosome. In Leuconostoc citreum (strain KM20), this protein is Elongation factor G.